A 179-amino-acid polypeptide reads, in one-letter code: Large ribosomal subunit protein uL5 (179 aa).

The protein belongs to the universal ribosomal protein uL5 family. Part of the 50S ribosomal subunit; part of the 5S rRNA/L5/L18/L25 subcomplex. Contacts the 5S rRNA and the P site tRNA. Forms a bridge to the 30S subunit in the 70S ribosome.

Functionally, this is one of the proteins that bind and probably mediate the attachment of the 5S RNA into the large ribosomal subunit, where it forms part of the central protuberance. In the 70S ribosome it contacts protein S13 of the 30S subunit (bridge B1b), connecting the 2 subunits; this bridge is implicated in subunit movement. Contacts the P site tRNA; the 5S rRNA and some of its associated proteins might help stabilize positioning of ribosome-bound tRNAs. The sequence is that of Large ribosomal subunit protein uL5 from Citrifermentans bemidjiense (strain ATCC BAA-1014 / DSM 16622 / JCM 12645 / Bem) (Geobacter bemidjiensis).